Reading from the N-terminus, the 804-residue chain is DNA mismatch repair protein MutS (804 aa).

614–621 (GPNMAGKS) is a binding site for ATP.

This sequence belongs to the DNA mismatch repair MutS family.

Its function is as follows. This protein is involved in the repair of mismatches in DNA. It is possible that it carries out the mismatch recognition step. This protein has a weak ATPase activity. This chain is DNA mismatch repair protein MutS, found in Ehrlichia ruminantium (strain Welgevonden).